The sequence spans 217 residues: Deoxyribose-phosphate aldolase (217 aa).

The active-site Proton donor/acceptor is the D95. K156 functions as the Schiff-base intermediate with acetaldehyde in the catalytic mechanism. The active-site Proton donor/acceptor is the K184.

This sequence belongs to the DeoC/FbaB aldolase family. DeoC type 1 subfamily.

The protein resides in the cytoplasm. The catalysed reaction is 2-deoxy-D-ribose 5-phosphate = D-glyceraldehyde 3-phosphate + acetaldehyde. It participates in carbohydrate degradation; 2-deoxy-D-ribose 1-phosphate degradation; D-glyceraldehyde 3-phosphate and acetaldehyde from 2-deoxy-alpha-D-ribose 1-phosphate: step 2/2. Its function is as follows. Catalyzes a reversible aldol reaction between acetaldehyde and D-glyceraldehyde 3-phosphate to generate 2-deoxy-D-ribose 5-phosphate. The sequence is that of Deoxyribose-phosphate aldolase from Thermosynechococcus vestitus (strain NIES-2133 / IAM M-273 / BP-1).